Here is a 153-residue protein sequence, read N- to C-terminus: UPF0260 protein YcgN (153 aa).

The protein belongs to the UPF0260 family.

This Salmonella typhi protein is UPF0260 protein YcgN.